Reading from the N-terminus, the 178-residue chain is MRYLVPLLVFMVLGMGCLGGGGEEMVKVSSVFGNDEFIPAKYTCEGIDVNPPLRIEGISENAKSLVIIVDDPDAPLGTFTHWIAWNIPPVEEIPEGIPKQGEVEKPIHMIQGRNDFGRIGYNGPCPPRGHGVHHYHFKVYVLDTTLNLRPGATREELEKAMEGHIIQFGELVGLYERK.

The N-terminal stretch at 1 to 22 (MRYLVPLLVFMVLGMGCLGGGG) is a signal peptide.

Belongs to the UPF0098 family.

The polypeptide is UPF0098 protein PYRAB11530 (Pyrococcus abyssi (strain GE5 / Orsay)).